A 553-amino-acid chain; its full sequence is Hydroxylamine reductase (553 aa).

[2Fe-2S] cluster contacts are provided by Cys3, Cys6, Cys18, and Cys25. The hybrid [4Fe-2O-2S] cluster site is built by His249, Glu273, Cys317, Cys405, Cys433, Cys459, Glu493, and Lys495. Cys405 carries the cysteine persulfide modification.

Belongs to the HCP family. [2Fe-2S] cluster serves as cofactor. The cofactor is hybrid [4Fe-2O-2S] cluster.

It localises to the cytoplasm. The enzyme catalyses A + NH4(+) + H2O = hydroxylamine + AH2 + H(+). In terms of biological role, catalyzes the reduction of hydroxylamine to form NH(3) and H(2)O. The polypeptide is Hydroxylamine reductase (Mannheimia succiniciproducens (strain KCTC 0769BP / MBEL55E)).